We begin with the raw amino-acid sequence, 1020 residues long: Tetrathionate reductase subunit A (1020 aa).

The tat-type signal signal peptide spans 1-33; that stretch reads MANLTRRQWLKVGLAVGGMVTFGLSYRDVAKRA. Residues 71 to 154 form the 4Fe-4S Mo/W bis-MGD-type domain; that stretch reads QTIAMTQCFG…TLLESLYSPL (84 aa). [4Fe-4S] cluster contacts are provided by cysteine 78, cysteine 81, cysteine 85, and cysteine 140.

This sequence belongs to the prokaryotic molybdopterin-containing oxidoreductase family. As to quaternary structure, probably composed of three subunits: TtrA, TtrB and TtrC. It depends on [4Fe-4S] cluster as a cofactor. Requires Mo-bis(molybdopterin guanine dinucleotide) as cofactor. Post-translationally, predicted to be exported by the Tat system. The position of the signal peptide cleavage has not been experimentally proven.

It is found in the periplasm. Its subcellular location is the cell inner membrane. In terms of biological role, part of a membrane-bound tetrathionate reductase that catalyzes the reduction of tetrathionate to thiosulfate. TtrA is the catalytic subunit. During mice infection, the ability to use tetrathionate as an electron acceptor is a growth advantage for S.typhimurium over the competing microbiota in the lumen of the inflamed gut. The protein is Tetrathionate reductase subunit A (ttrA) of Salmonella typhimurium (strain LT2 / SGSC1412 / ATCC 700720).